The primary structure comprises 249 residues: MRPKIVAGNWKLHGSHAFAQALVAQVAAGLPLPGVSVIILPPLLYLSDLAQRFKGEGLAFGAQNVSHHDKGAYTGEVSAAMVADVGAHYTLVGHSERREYHHEDSELVARKFAAALSAGLRPILCVGESLPQREAGQAEVAIAMQLAPVLALVGPQGVARGLIAYEPVWAIGTGRHADPSQVQAMHAFIRGEIARQDARIGDSLLILYGGGIKPCNAAELFSQQDVDGGLIGGASLVADDFLAIARATV.

9–11 lines the substrate pocket; the sequence is NWK. The active-site Electrophile is the His94. The active-site Proton acceptor is Glu166. Residues Gly172 and 232–233 contribute to the substrate site; that span reads GG.

It belongs to the triosephosphate isomerase family. As to quaternary structure, homodimer.

The protein localises to the cytoplasm. The catalysed reaction is D-glyceraldehyde 3-phosphate = dihydroxyacetone phosphate. It participates in carbohydrate biosynthesis; gluconeogenesis. The protein operates within carbohydrate degradation; glycolysis; D-glyceraldehyde 3-phosphate from glycerone phosphate: step 1/1. Its function is as follows. Involved in the gluconeogenesis. Catalyzes stereospecifically the conversion of dihydroxyacetone phosphate (DHAP) to D-glyceraldehyde-3-phosphate (G3P). This is Triosephosphate isomerase from Xylella fastidiosa (strain M23).